Consider the following 237-residue polypeptide: Cytochrome c oxidase subunit 2 (237 aa).

The Mitochondrial intermembrane segment spans residues 1–30 (MNLVAPTPWGLFFQDSATPQMEGIEELHNN). Residues 31–51 (IMFYLTIILFSVTWMMITIIK) form a helical membrane-spanning segment. Residues 52–67 (SFVNTKSPISHKYMNH) are Mitochondrial matrix-facing. Residues 68-94 (GTLIELIWTITPAVILILIAFPSFKLL) traverse the membrane as a helical segment. Over 95–237 (YLMDEVMDPS…SVSLKNFYYD (143 aa)) the chain is Mitochondrial intermembrane. 6 residues coordinate Cu cation: His-176, Cys-211, Glu-213, Cys-215, His-219, and Met-222. Residue Glu-213 participates in Mg(2+) binding.

This sequence belongs to the cytochrome c oxidase subunit 2 family. As to quaternary structure, component of the cytochrome c oxidase (complex IV, CIV), a multisubunit enzyme composed of a catalytic core of 3 subunits and several supernumerary subunits. The complex exists as a monomer or a dimer and forms supercomplexes (SCs) in the inner mitochondrial membrane with ubiquinol-cytochrome c oxidoreductase (cytochrome b-c1 complex, complex III, CIII). Requires Cu cation as cofactor.

It localises to the mitochondrion inner membrane. The catalysed reaction is 4 Fe(II)-[cytochrome c] + O2 + 8 H(+)(in) = 4 Fe(III)-[cytochrome c] + 2 H2O + 4 H(+)(out). Its function is as follows. Component of the cytochrome c oxidase, the last enzyme in the mitochondrial electron transport chain which drives oxidative phosphorylation. The respiratory chain contains 3 multisubunit complexes succinate dehydrogenase (complex II, CII), ubiquinol-cytochrome c oxidoreductase (cytochrome b-c1 complex, complex III, CIII) and cytochrome c oxidase (complex IV, CIV), that cooperate to transfer electrons derived from NADH and succinate to molecular oxygen, creating an electrochemical gradient over the inner membrane that drives transmembrane transport and the ATP synthase. Cytochrome c oxidase is the component of the respiratory chain that catalyzes the reduction of oxygen to water. Electrons originating from reduced cytochrome c in the intermembrane space (IMS) are transferred via the dinuclear copper A center (CU(A)) of subunit 2 and heme A of subunit 1 to the active site in subunit 1, a binuclear center (BNC) formed by heme A3 and copper B (CU(B)). The BNC reduces molecular oxygen to 2 water molecules using 4 electrons from cytochrome c in the IMS and 4 protons from the mitochondrial matrix. The polypeptide is Cytochrome c oxidase subunit 2 (COX2) (Trichophyton rubrum (Athlete's foot fungus)).